A 549-amino-acid chain; its full sequence is Glucose-6-phosphate isomerase (549 aa).

The active-site Proton donor is the E355. Active-site residues include H386 and K514.

The protein belongs to the GPI family.

The protein resides in the cytoplasm. It catalyses the reaction alpha-D-glucose 6-phosphate = beta-D-fructose 6-phosphate. Its pathway is carbohydrate biosynthesis; gluconeogenesis. The protein operates within carbohydrate degradation; glycolysis; D-glyceraldehyde 3-phosphate and glycerone phosphate from D-glucose: step 2/4. Catalyzes the reversible isomerization of glucose-6-phosphate to fructose-6-phosphate. The chain is Glucose-6-phosphate isomerase from Salmonella arizonae (strain ATCC BAA-731 / CDC346-86 / RSK2980).